We begin with the raw amino-acid sequence, 478 residues long: Chromosomal replication initiator protein DnaA (478 aa).

The interval 1 to 82 (MHTMNKTAES…ELGKNAKLLY (82 aa)) is domain I, interacts with DnaA modulators. The interval 82 to 140 (YKIKMENTYGNKLPFTEQLPSAHRSPVRTQEIDVPVQQKNPELRNPFIIPGIRNLKIES) is domain II. The interval 141–358 (QLNANYSFDN…GAIISLIAQS (218 aa)) is domain III, AAA+ region. The ATP site is built by Gly-186, Gly-188, Lys-189, and Thr-190. The domain IV, binds dsDNA stretch occupies residues 359-478 (SFNKKEVTLE…VDDINKKLSL (120 aa)).

The protein belongs to the DnaA family. As to quaternary structure, oligomerizes as a right-handed, spiral filament on DNA at oriC.

The protein localises to the cytoplasm. In terms of biological role, plays an essential role in the initiation and regulation of chromosomal replication. ATP-DnaA binds to the origin of replication (oriC) to initiate formation of the DNA replication initiation complex once per cell cycle. Binds the DnaA box (a 9 base pair repeat at the origin) and separates the double-stranded (ds)DNA. Forms a right-handed helical filament on oriC DNA; dsDNA binds to the exterior of the filament while single-stranded (ss)DNA is stabiized in the filament's interior. The ATP-DnaA-oriC complex binds and stabilizes one strand of the AT-rich DNA unwinding element (DUE), permitting loading of DNA polymerase. After initiation quickly degrades to an ADP-DnaA complex that is not apt for DNA replication. Binds acidic phospholipids. This chain is Chromosomal replication initiator protein DnaA, found in Flavobacterium psychrophilum (strain ATCC 49511 / DSM 21280 / CIP 103535 / JIP02/86).